We begin with the raw amino-acid sequence, 308 residues long: Probable plastid-lipid-associated protein 9, chloroplastic (308 aa).

Residues 1-55 constitute a chloroplast transit peptide; the sequence is MALIQHGSVSGTSAVRLSFSSSVSPPSSSPPLSRVSLNFQSEKKSCYRRMICRAM.

It belongs to the PAP/fibrillin family.

Its subcellular location is the plastid. It localises to the chloroplast. The protein resides in the plastoglobule. This chain is Probable plastid-lipid-associated protein 9, chloroplastic (PAP9), found in Arabidopsis thaliana (Mouse-ear cress).